Consider the following 206-residue polypeptide: Cytidylate kinase (206 aa).

7–15 contributes to the ATP binding site; that stretch reads GVAASGKSS.

The protein belongs to the cytidylate kinase family. Type 1 subfamily.

The protein resides in the cytoplasm. It carries out the reaction CMP + ATP = CDP + ADP. The catalysed reaction is dCMP + ATP = dCDP + ADP. The polypeptide is Cytidylate kinase (Deinococcus radiodurans (strain ATCC 13939 / DSM 20539 / JCM 16871 / CCUG 27074 / LMG 4051 / NBRC 15346 / NCIMB 9279 / VKM B-1422 / R1)).